Reading from the N-terminus, the 446-residue chain is Probable D-serine dehydratase (446 aa).

K116 is modified (N6-(pyridoxal phosphate)lysine).

This sequence belongs to the serine/threonine dehydratase family. DsdA subfamily. Pyridoxal 5'-phosphate serves as cofactor.

The catalysed reaction is D-serine = pyruvate + NH4(+). This is Probable D-serine dehydratase from Bacillus cereus (strain ZK / E33L).